The following is a 292-amino-acid chain: Tyrosine isonitrile desaturase (292 aa).

The Fe cation site is built by H110, D112, and H259.

The protein belongs to the TfdA dioxygenase family. It depends on Fe(2+) as a cofactor.

The enzyme catalyses (2S)-3-(4-hydroxyphenyl)-2-isocyanopropanoate + 2-oxoglutarate + O2 = (2E)-3-(4-hydroxyphenyl)-2-isocyanoprop-2-enoate + succinate + CO2 + H2O. Its function is as follows. Catalyzes the 2-oxoglutarate-dependent oxidation of tyrosine isonitrile. In Erwinia amylovora (strain CFBP1430), this protein is Tyrosine isonitrile desaturase.